The following is a 731-amino-acid chain: MSSIARPPDPCLVAIILIVRSRAGPRFVFHYPPNPLSENGLRAAPKGRRPSRAKSAKSNDSSSSEESGSTSDEDEEEAHAQSQNASSADVWEKLLSPSRSWHKRRFEVGINDLAFVGWPVFVREDGTWRKQRRKKKKTKPEWEGGELGHNEIPGDVRDDADEAIAASTETLSPHTMTASESQRASMGSIRSSRTLSEMLDGDDKDSMTMFNVVFVLDPPLLEYSMRIREIYDNIIKKFAKALKWEQARTDYVWREAQHISHIKEKAKETRTSVNTLYSELINHSSLARAIYTVYSNISASKIASVSLSPDVSISLQIPPLTSTPYLPGPGDKAYPGLWLTTADSVTPADDPTADENTAPHQVLAKHFALLLLSDEATILKDVEASGGALAPALAHYIRCSKPTKSFAQISALSGIPLSTIQMLASHLVYWRRARAIPPLHQRDVYFVSPNCDLSKLEVATAAYQLAFPTLPSLPKMLSALSGTPRPYGSFIPSKDHKEAYFAILAWLLRGGWVTQLRTFARVKVSPEIKMAVERALRREEVDKYLSKQGSSILSDHSKHNGDTSKNDDDDASSSSSSSLASQDSGEETPMPGRYKPDSKLHLSHSLLDQDTSLKTASLILFPHRAPPLESRWLDEIVSRFPKQPRFSVRGRANIDENDPEYAGLRTAMKDLWPVYIKYFNGMDALEKVPVRENLKRKLVWQVLTRLGLVTGSQSYIELDPSEQVLIGVRHW.

A signal peptide spans Met1–Ala23. Disordered regions lie at residues Asn34–Val90, Arg129–Val156, Thr168–Gly187, and Gly549–Lys599. Basic residues predominate over residues Pro45–Ser55. The segment covering Ser58–Thr70 has biased composition (low complexity). Residues Arg129–Thr138 show a composition bias toward basic residues. Basic and acidic residues predominate over residues Lys139–Val156. Residues Asp555–Asn566 are compositionally biased toward basic and acidic residues. The segment covering Ser572 to Asp583 has biased composition (low complexity).

Belongs to the NPR3 family.

Functionally, mediates inactivation of the TORC1 complex in response to amino acid starvation. Required for meiotic nuclear division. The polypeptide is Nitrogen permease regulator 3 (npr3) (Aspergillus oryzae (strain ATCC 42149 / RIB 40) (Yellow koji mold)).